A 254-amino-acid chain; its full sequence is uncharacterized protein (254 aa).

Positions 66–111 (DMVSEMNKRMDDLAARIVVLEDEKAELRRINQRLTEKVRDKDMEKA) form a coiled coil.

This is an uncharacterized protein from Ostreid herpesvirus 1 (isolate France) (OsHV-1).